The sequence spans 340 residues: GTP 3',8-cyclase (340 aa).

The 220-residue stretch at 8–227 (KLGRPIRDLR…TMIEQHFEID (220 aa)) folds into the Radical SAM core domain. A GTP-binding site is contributed by arginine 17. Residues cysteine 24 and cysteine 28 each contribute to the [4Fe-4S] cluster site. Tyrosine 30 contributes to the S-adenosyl-L-methionine binding site. Cysteine 31 is a [4Fe-4S] cluster binding site. Arginine 71 lines the GTP pocket. Residue glycine 75 participates in S-adenosyl-L-methionine binding. Threonine 102 is a binding site for GTP. Serine 126 contributes to the S-adenosyl-L-methionine binding site. Lysine 163 lines the GTP pocket. An S-adenosyl-L-methionine-binding site is contributed by methionine 197. 2 residues coordinate [4Fe-4S] cluster: cysteine 261 and cysteine 264. 266 to 268 (RAR) serves as a coordination point for GTP. Cysteine 278 serves as a coordination point for [4Fe-4S] cluster.

This sequence belongs to the radical SAM superfamily. MoaA family. In terms of assembly, monomer and homodimer. [4Fe-4S] cluster serves as cofactor.

The enzyme catalyses GTP + AH2 + S-adenosyl-L-methionine = (8S)-3',8-cyclo-7,8-dihydroguanosine 5'-triphosphate + 5'-deoxyadenosine + L-methionine + A + H(+). It functions in the pathway cofactor biosynthesis; molybdopterin biosynthesis. Functionally, catalyzes the cyclization of GTP to (8S)-3',8-cyclo-7,8-dihydroguanosine 5'-triphosphate. The chain is GTP 3',8-cyclase from Staphylococcus aureus (strain USA300).